A 200-amino-acid polypeptide reads, in one-letter code: 3-isopropylmalate dehydratase small subunit (200 aa).

Belongs to the LeuD family. LeuD type 1 subfamily. Heterodimer of LeuC and LeuD.

It carries out the reaction (2R,3S)-3-isopropylmalate = (2S)-2-isopropylmalate. It participates in amino-acid biosynthesis; L-leucine biosynthesis; L-leucine from 3-methyl-2-oxobutanoate: step 2/4. Catalyzes the isomerization between 2-isopropylmalate and 3-isopropylmalate, via the formation of 2-isopropylmaleate. The polypeptide is 3-isopropylmalate dehydratase small subunit (Vibrio campbellii (strain ATCC BAA-1116)).